A 312-amino-acid polypeptide reads, in one-letter code: Olfactory receptor 2J2 (312 aa).

Residues 1 to 26 (MMIKKNASSEDFFILLGFSNWPQLEV) are Extracellular-facing. The N-linked (GlcNAc...) asparagine glycan is linked to Asn-6. A helical membrane pass occupies residues 27–50 (VLFVVILIFYLMTLTGNLFIIILS). The Cytoplasmic segment spans residues 51-58 (YVDSHLHT). The chain crosses the membrane as a helical span at residues 59 to 80 (PMYFFLSNLSFLDLCHTTSSIP). Over 81–101 (QLLVNLRGPEKTISYAGCMVQ) the chain is Extracellular. Cys-98 and Cys-190 are joined by a disulfide. The chain crosses the membrane as a helical span at residues 102 to 121 (LYFVLALGIAECVLLVVMSY). Topologically, residues 122-140 (DRYVAVCRPLHYTVLMHPR) are cytoplasmic. Residues 141-159 (FCHLLAAASWVIGFTISAL) traverse the membrane as a helical segment. Residues 160 to 196 (HSSFTFWVPLCGHRLVDHFFCEVPALLRLSCVDTHAN) are Extracellular-facing. The helical transmembrane segment at 197-220 (ELTLMVMSSIFVLIPLILILTAYG) threads the bilayer. Residues 221–237 (AIARAVLSMQSTTGLQK) lie on the Cytoplasmic side of the membrane. A helical membrane pass occupies residues 238-260 (VFRTCGAHLMVVSLFFIPVMCMY). Residues 261–273 (LQPPSENSPDQGK) lie on the Extracellular side of the membrane. A helical membrane pass occupies residues 274-293 (FIALFYTVVTPSLNPLIYTL). Residues 294 to 312 (RNKHVKGAAKRLLGWEWGK) are Cytoplasmic-facing.

The protein belongs to the G-protein coupled receptor 1 family.

Its subcellular location is the cell membrane. Odorant receptor. This is Olfactory receptor 2J2 (OR2J2) from Homo sapiens (Human).